The sequence spans 445 residues: Exodeoxyribonuclease 7 large subunit (445 aa).

It belongs to the XseA family. In terms of assembly, heterooligomer composed of large and small subunits.

Its subcellular location is the cytoplasm. It carries out the reaction Exonucleolytic cleavage in either 5'- to 3'- or 3'- to 5'-direction to yield nucleoside 5'-phosphates.. Functionally, bidirectionally degrades single-stranded DNA into large acid-insoluble oligonucleotides, which are then degraded further into small acid-soluble oligonucleotides. In Staphylococcus aureus (strain bovine RF122 / ET3-1), this protein is Exodeoxyribonuclease 7 large subunit.